Here is a 149-residue protein sequence, read N- to C-terminus: Small heat shock protein IbpB (149 aa).

The region spanning 26–137 (SQEPIDFPPY…QPQRIAIGGG (112 aa)) is the sHSP domain.

It belongs to the small heat shock protein (HSP20) family. Homodimer. Forms homomultimers of about 100-150 subunits at optimal growth temperatures. Conformation changes to oligomers at high temperatures or high ionic concentrations. The decrease in size of the multimers is accompanied by an increase in chaperone activity.

The protein localises to the cytoplasm. Associates with aggregated proteins, together with IbpA, to stabilize and protect them from irreversible denaturation and extensive proteolysis during heat shock and oxidative stress. Aggregated proteins bound to the IbpAB complex are more efficiently refolded and reactivated by the ATP-dependent chaperone systems ClpB and DnaK/DnaJ/GrpE. Its activity is ATP-independent. The protein is Small heat shock protein IbpB of Pectobacterium carotovorum subsp. carotovorum (strain PC1).